A 500-amino-acid polypeptide reads, in one-letter code: Protein SLENDER RICE1-LIKE 2 (500 aa).

The 387-residue stretch at 68–454 (KELEKMALRS…QRLYSASAWR (387 aa)) folds into the GRAS domain. Residues 75-135 (LRSVNLMVTC…DALAERLFPA (61 aa)) are leucine repeat I (LRI). The segment at 154–219 (FRGFYEAGPY…GGPPFLRITG (66 aa)) is VHIID. The VHIID motif lies at 185–189 (VHVID). Residues 233-265 (DVGLRLAEFARSCSVPFAFRGIAADQLDGLRPW) are leucine repeat II (LRII). The segment at 275–376 (VAINSVLQLH…EAYLQGEIAD (102 aa)) is PFYRE. Residues 283-287 (LHRLL) carry the LXXLL motif motif. Residues 379–454 (SREGSSRVER…QRLYSASAWR (76 aa)) form an SAW region. A disordered region spans residues 466–500 (SGAADAMEESQNSNTNGGGGGSSGGGHGALNQIMQ). Residues 481–493 (NGGGGGSSGGGHG) are compositionally biased toward gly residues.

The protein belongs to the GRAS family. Expressed at low levels in leaf blades, leaf sheaths, rachis and flowers. Expressed in the embryo of immature seeds.

The protein resides in the nucleus. Its function is as follows. Probable transcriptional regulator that acts as a repressor of the gibberellin (GA) signaling pathway. Its repressive activity is weaker than that of SLR1. Its overexpression prevents the GA signaling pathway and induces a dwarf phenotype in Arabidopsis thaliana plants. The sequence is that of Protein SLENDER RICE1-LIKE 2 from Oryza sativa subsp. japonica (Rice).